Here is a 657-residue protein sequence, read N- to C-terminus: NADH-quinone oxidoreductase subunit L (657 aa).

Helical transmembrane passes span 5–25 (NICI…GLFL), 32–52 (LAQV…LIIF), 89–109 (IMFI…LGYM), 114–134 (GIIR…MLVS), 138–158 (FLQL…LIGF), 172–192 (AFII…TIIV), 214–234 (IFLH…GCMG), 253–273 (TPVS…FLVA), 285–305 (ILQF…SIAI), 313–333 (IIAY…GVSA), 339–359 (FHLV…GSVI), 381–401 (YGNF…AGFY), 416–436 (FMFI…MKII), 465–485 (LILL…LLAM), 511–531 (LYIK…GIYL), 580–600 (EIYN…FYLG), and 632–652 (VFNY…YFVW).

Belongs to the complex I subunit 5 family.

It is found in the cell membrane. It catalyses the reaction a quinone + NADH + 5 H(+)(in) = a quinol + NAD(+) + 4 H(+)(out). NDH-1 shuttles electrons from NADH, via FMN and iron-sulfur (Fe-S) centers, to quinones in the respiratory chain. Couples the redox reaction to proton translocation (for every two electrons transferred, four hydrogen ions are translocated across the cytoplasmic membrane), and thus conserves the redox energy in a proton gradient. The polypeptide is NADH-quinone oxidoreductase subunit L (nuoL) (Rickettsia conorii (strain ATCC VR-613 / Malish 7)).